A 192-amino-acid chain; its full sequence is Protein GrpE (192 aa).

The interval 1-43 is disordered; the sequence is MQENKQPSEIQGELPQPPDGESVPPQPTNEQAPPDTDTMPRIE.

It belongs to the GrpE family. In terms of assembly, homodimer.

The protein localises to the cytoplasm. In terms of biological role, participates actively in the response to hyperosmotic and heat shock by preventing the aggregation of stress-denatured proteins, in association with DnaK and GrpE. It is the nucleotide exchange factor for DnaK and may function as a thermosensor. Unfolded proteins bind initially to DnaJ; upon interaction with the DnaJ-bound protein, DnaK hydrolyzes its bound ATP, resulting in the formation of a stable complex. GrpE releases ADP from DnaK; ATP binding to DnaK triggers the release of the substrate protein, thus completing the reaction cycle. Several rounds of ATP-dependent interactions between DnaJ, DnaK and GrpE are required for fully efficient folding. The chain is Protein GrpE from Aromatoleum aromaticum (strain DSM 19018 / LMG 30748 / EbN1) (Azoarcus sp. (strain EbN1)).